The sequence spans 223 residues: MDLASLRAQQIELASSVIREDRLDKDPPDLIAGADVGFEQGGEVTRAAMVLLKYPSLELVEYKVARIATTMPYIPGFLSFREYPALLAAWEMLSQKPDLVFVDGHGISHPRRLGVASHFGLLVDVPTIGVAKKRLCGKFEPLPSEPGALAPLMDKGEQLAWVWRSKARCNPLFIATGHRVSVDSALAWVQRCMKGYRLPEPTRWADAVASERPAFVSYTANQP.

Mg(2+) contacts are provided by Asp-35 and Asp-103.

This sequence belongs to the endonuclease V family. The cofactor is Mg(2+).

The protein resides in the cytoplasm. It carries out the reaction Endonucleolytic cleavage at apurinic or apyrimidinic sites to products with a 5'-phosphate.. Its function is as follows. DNA repair enzyme involved in the repair of deaminated bases. Selectively cleaves double-stranded DNA at the second phosphodiester bond 3' to a deoxyinosine leaving behind the intact lesion on the nicked DNA. The polypeptide is Endonuclease V (Shigella dysenteriae serotype 1 (strain Sd197)).